Consider the following 816-residue polypeptide: Sodium/hydrogen exchanger 1 (816 aa).

Over 1–98 (MLLWSAVRGL…FPVLGIDYTH (98 aa)) the chain is Extracellular. Polar residues predominate over residues 37-50 (LQLSPTDSTTPDSQ). Positions 37–79 (LQLSPTDSTTPDSQPSRERSIGDVTTAPPEVTPESRPVNRSVT) are disordered. Asparagine 75 carries N-linked (GlcNAc...) asparagine glycosylation. Residues 99-121 (VRTPFEISLWILLACLMKIGFHV) traverse the membrane as a helical segment. Residues 122-130 (IPTISSIVP) lie on the Cytoplasmic side of the membrane. The helical transmembrane segment at 131-148 (ESCLLIVVGLLVGGLIKG) threads the bilayer. Residues 149-158 (VGEKPPFLQS) are Extracellular-facing. Residues 159 to 176 (EVFFLFLLPPIILDAGYF) form a helical membrane-spanning segment. Residues 177-186 (LPLRQFTENL) are Cytoplasmic-facing. Residues 187 to 215 (GTILIFAVVGTLWNAFFLGGLMYAVCLVG) traverse the membrane as a helical segment. Residues 216–222 (GEQINNI) are Extracellular-facing. The helical transmembrane segment at 223 to 249 (GLLDNLLFGSIISAVDPVAVLAVFEEI) threads the bilayer. The Cytoplasmic segment spans residues 250–252 (HIN). A helical membrane pass occupies residues 253–283 (ELLHILVFGESLLNDAVTVVLYHLFEEFANY). Residues 284–287 (DHVG) lie on the Extracellular side of the membrane. Residues 288–322 (IVDIVLGFLSFFVVALGGVFVGVVYGVIAAFTSRF) traverse the membrane as a helical segment. At 323–328 (TAHIRV) the chain is on the cytoplasmic side. A helical membrane pass occupies residues 329–341 (IEPLFVFLYSYMA). Over 342–350 (YLSAELFHL) the chain is Extracellular. Residues 351-371 (SGIMALIASGVVMRPYVEANI) form a helical membrane-spanning segment. Residues 372–373 (SH) lie on the Cytoplasmic side of the membrane. Residues 374-404 (KSHTTIKYFLKMWSSVSETLIFIFLGVSTVA) form a helical membrane-spanning segment. The Extracellular segment spans residues 405–410 (GSHHWN). The helical transmembrane segment at 411-438 (WTFVISTLLFCLIARVLGVLGLTWFINK) threads the bilayer. The Cytoplasmic portion of the chain corresponds to 439-444 (FRIVKL). A helical membrane pass occupies residues 445 to 469 (TPKDQFIIAYGGLRGAIAFSLGYLL). Over 470 to 475 (DKKHFP) the chain is Extracellular. A helical transmembrane segment spans residues 476–505 (MCDLFLTAIITVIFFTVFVQGMTIRPLVDL). Residues 503-545 (VDLLAVKKKQETKRSINEEIHTQFLDHLLTGIEDICGHYGHHH) are interaction with TESC. At 506–816 (LAVKKKQETK…EGEPFIPKGQ (311 aa)) the chain is on the cytoplasmic side. Positions 509-516 (KKKQETKR) are PI(4,5)P2-binding region. The interval 515 to 545 (KRSINEEIHTQFLDHLLTGIEDICGHYGHHH) is interaction with CHP2. A confers pH-dependent PI(4,5)P2 binding region spans residues 540 to 545 (HYGHHH). The interval 552-560 (RFNKKYVKK) is PI(4,5)P2-binding region. Phosphoserine is present on residues serine 599 and serine 602. Threonine 603 bears the Phosphothreonine mark. Serine 605 and serine 648 each carry phosphoserine. An interaction with TESC region spans residues 633–816 (KILRNNLQKT…EGEPFIPKGQ (184 aa)). The segment at 633–816 (KILRNNLQKT…EGEPFIPKGQ (184 aa)) is interaction with CALM1. The tract at residues 684-687 (LTVP) is interaction with PPP3CA. Residues serine 693, serine 697, and serine 703 each carry the phosphoserine modification. An interaction with PPP3CA region spans residues 715–720 (PVITID). Phosphoserine occurs at positions 723, 726, 729, 786, 788, and 797. The tract at residues 748–816 (PRVAEEAAEE…EGEPFIPKGQ (69 aa)) is disordered. A compositionally biased stretch (polar residues) spans 783–792 (PSDSPSSQRM).

It belongs to the monovalent cation:proton antiporter 1 (CPA1) transporter (TC 2.A.36) family. Homodimer; dimerization is crucial for its function. Oligomer. Interacts with CALM in a calcium-dependent manner. Interacts with TESC. Interacts (via the juxtamembrane region of the cytoplasmic C-terminal domain) with CHP1; the interaction occurs at the plasma membrane in a calcium-dependent manner. Interacts with CHP2; the interaction occurs in a calcium-dependent manner. Interacts with EZR; regulates the cytoskeletal interactions of SLC9A1 and promotes stress fiber formation. Ubiquitinated, leading to its degradation by the proteasome. Ubiquitination is reduced by CHP1. In terms of processing, O-glycosylated. Post-translationally, palmitoylated; may play a major role in SLC9A1 regulation. Phosphorylation at Ser-648 by AKT1 reduces SLC9A1 binding to CALM1. Kidney and intestine.

Its subcellular location is the cell membrane. The protein resides in the basolateral cell membrane. It catalyses the reaction Na(+)(in) + H(+)(out) = Na(+)(out) + H(+)(in). The catalysed reaction is Li(+)(out) + H(+)(in) = Li(+)(in) + H(+)(out). It carries out the reaction Li(+)(in) + Na(+)(out) = Li(+)(out) + Na(+)(in). Its activity is regulated as follows. Activated at acidic pHs. Inhibited by cariporide and eniporide. Phosphatidylinositol 4,5-bisphosphate (PI(4,5)P2) and phosphatidylinositol 3,4,5-trisphosphate (PI(3,4,5)P3) bind and differentially regulate SLC9A1 activity. In terms of biological role, electroneutral Na(+) /H(+) antiporter that extrudes Na(+) in exchange for external protons driven by the inward sodium ion chemical gradient, protecting cells from acidification that occurs from metabolism. Exchanges intracellular H(+) ions for extracellular Na(+) in 1:1 stoichiometry. Plays a key role in maintening intracellular pH neutral and cell volume, and thus is important for cell growth, proliferation, migration and survival. In addition, can transport lithium Li(+) and functions also as a Na(+)/Li(+) antiporter. SLC9A1 also functions in membrane anchoring and organization of scaffolding complexes that coordinate signaling inputs. In Oryctolagus cuniculus (Rabbit), this protein is Sodium/hydrogen exchanger 1 (SLC9A1).